The primary structure comprises 833 residues: Leucine--tRNA ligase (833 aa).

The 'HIGH' region signature appears at 41–52; sequence PYPSGAGLHVGH. Positions 610-614 match the 'KMSKS' region motif; it reads KMSKS. Lys613 contributes to the ATP binding site.

Belongs to the class-I aminoacyl-tRNA synthetase family.

The protein resides in the cytoplasm. It catalyses the reaction tRNA(Leu) + L-leucine + ATP = L-leucyl-tRNA(Leu) + AMP + diphosphate. The polypeptide is Leucine--tRNA ligase (Streptococcus pyogenes serotype M18 (strain MGAS8232)).